A 580-amino-acid polypeptide reads, in one-letter code: Acyl-coenzyme A synthetase ACSM4, mitochondrial (580 aa).

A mitochondrion-targeting transit peptide spans 1-22 (MKIFFRYQTFRFIWLTKPPGRR). ATP is bound by residues 229 to 237 (TSGTTGFPK), 368 to 373 (EGYGQT), Asp455, Arg470, and Lys566.

Belongs to the ATP-dependent AMP-binding enzyme family. It depends on Mg(2+) as a cofactor. Mn(2+) is required as a cofactor.

It localises to the mitochondrion. It catalyses the reaction a medium-chain fatty acid + ATP + CoA = a medium-chain fatty acyl-CoA + AMP + diphosphate. The enzyme catalyses hexanoate + ATP + CoA = hexanoyl-CoA + AMP + diphosphate. The catalysed reaction is octanoate + ATP + CoA = octanoyl-CoA + AMP + diphosphate. It carries out the reaction decanoate + ATP + CoA = decanoyl-CoA + AMP + diphosphate. It catalyses the reaction dodecanoate + ATP + CoA = dodecanoyl-CoA + AMP + diphosphate. Its function is as follows. Catalyzes the activation of fatty acids by CoA to produce an acyl-CoA, the first step in fatty acid metabolism. Capable of activating medium-chain fatty acids with a preference for C6-12 fatty acids. The protein is Acyl-coenzyme A synthetase ACSM4, mitochondrial (ACSM4) of Homo sapiens (Human).